The chain runs to 249 residues: 5-amino-6-(5-phospho-D-ribitylamino)uracil phosphatase YcsE (249 aa).

The active-site Nucleophile is the Asp16. Mg(2+) is bound at residue Asp16. Residue Met17 participates in phosphate binding. Asp18 contacts Mg(2+). Residues 50 to 51 and Lys177 contribute to the phosphate site; that span reads TG. The Mg(2+) site is built by Asp200 and Ser201. Asn203 serves as a coordination point for phosphate.

The protein belongs to the HAD-like hydrolase superfamily. Cof family. The cofactor is Mg(2+).

It catalyses the reaction 5-amino-6-(5-phospho-D-ribitylamino)uracil + H2O = 5-amino-6-(D-ribitylamino)uracil + phosphate. The protein operates within cofactor biosynthesis; riboflavin biosynthesis; 5-amino-6-(D-ribitylamino)uracil from GTP: step 4/4. In terms of biological role, catalyzes the dephosphorylation of the riboflavin precursor 5-amino-6-(5-phospho-D-ribitylamino)uracil and of flavin mononucleotide (FMN) in vitro. To a lesser extent, may also catalyze the dephosphorylation of a broad range of substrates such as phosphorylated sugars and triphosphate nucleotides in vitro. The protein is 5-amino-6-(5-phospho-D-ribitylamino)uracil phosphatase YcsE (ycsE) of Bacillus subtilis (strain 168).